A 350-amino-acid chain; its full sequence is S-adenosylmethionine:tRNA ribosyltransferase-isomerase (350 aa).

It belongs to the QueA family. In terms of assembly, monomer.

Its subcellular location is the cytoplasm. It carries out the reaction 7-aminomethyl-7-carbaguanosine(34) in tRNA + S-adenosyl-L-methionine = epoxyqueuosine(34) in tRNA + adenine + L-methionine + 2 H(+). It functions in the pathway tRNA modification; tRNA-queuosine biosynthesis. Its function is as follows. Transfers and isomerizes the ribose moiety from AdoMet to the 7-aminomethyl group of 7-deazaguanine (preQ1-tRNA) to give epoxyqueuosine (oQ-tRNA). This chain is S-adenosylmethionine:tRNA ribosyltransferase-isomerase, found in Bacillus thuringiensis subsp. konkukian (strain 97-27).